We begin with the raw amino-acid sequence, 180 residues long: Acireductone dioxygenase (180 aa).

The Fe(2+) site is built by histidine 97, histidine 99, glutamate 103, and histidine 141. Residues histidine 97, histidine 99, glutamate 103, and histidine 141 each contribute to the Ni(2+) site.

The protein belongs to the acireductone dioxygenase (ARD) family. As to quaternary structure, monomer. It depends on Fe(2+) as a cofactor. Mg(2+) is required as a cofactor. Ni(2+) serves as cofactor. Requires Mn(2+) as cofactor. The cofactor is Co(2+).

The enzyme catalyses 1,2-dihydroxy-5-(methylsulfanyl)pent-1-en-3-one + O2 = 3-(methylsulfanyl)propanoate + CO + formate + 2 H(+). It carries out the reaction 1,2-dihydroxy-5-(methylsulfanyl)pent-1-en-3-one + O2 = 4-methylsulfanyl-2-oxobutanoate + formate + 2 H(+). The protein operates within amino-acid biosynthesis; L-methionine biosynthesis via salvage pathway; L-methionine from S-methyl-5-thio-alpha-D-ribose 1-phosphate: step 5/6. In terms of biological role, catalyzes 2 different reactions between oxygen and the acireductone 1,2-dihydroxy-3-keto-5-methylthiopentene (DHK-MTPene) depending upon the metal bound in the active site. Fe-containing acireductone dioxygenase (Fe-ARD) produces formate and 2-keto-4-methylthiobutyrate (KMTB), the alpha-ketoacid precursor of methionine in the methionine recycle pathway. Ni-containing acireductone dioxygenase (Ni-ARD) produces methylthiopropionate, carbon monoxide and formate, and does not lie on the methionine recycle pathway. This Klebsiella oxytoca protein is Acireductone dioxygenase (mtnD).